Here is a 265-residue protein sequence, read N- to C-terminus: Thiazole synthase (265 aa).

Catalysis depends on Lys-103, which acts as the Schiff-base intermediate with DXP. 1-deoxy-D-xylulose 5-phosphate-binding positions include Gly-164, 190–191 (AG), and 212–213 (NT).

Belongs to the ThiG family. Homotetramer. Forms heterodimers with either ThiH or ThiS.

The protein resides in the cytoplasm. It catalyses the reaction [ThiS sulfur-carrier protein]-C-terminal-Gly-aminoethanethioate + 2-iminoacetate + 1-deoxy-D-xylulose 5-phosphate = [ThiS sulfur-carrier protein]-C-terminal Gly-Gly + 2-[(2R,5Z)-2-carboxy-4-methylthiazol-5(2H)-ylidene]ethyl phosphate + 2 H2O + H(+). Its pathway is cofactor biosynthesis; thiamine diphosphate biosynthesis. Functionally, catalyzes the rearrangement of 1-deoxy-D-xylulose 5-phosphate (DXP) to produce the thiazole phosphate moiety of thiamine. Sulfur is provided by the thiocarboxylate moiety of the carrier protein ThiS. In vitro, sulfur can be provided by H(2)S. In Bordetella pertussis (strain Tohama I / ATCC BAA-589 / NCTC 13251), this protein is Thiazole synthase.